An 88-amino-acid polypeptide reads, in one-letter code: Large ribosomal subunit protein bL27 (88 aa).

The interval 1–25 is disordered; the sequence is MAHKKGASSSSNGRDSEAKRLGVKR.

The protein belongs to the bacterial ribosomal protein bL27 family.

This is Large ribosomal subunit protein bL27 from Corynebacterium diphtheriae (strain ATCC 700971 / NCTC 13129 / Biotype gravis).